The chain runs to 399 residues: S-adenosylmethionine synthase (399 aa).

Residue His17 coordinates ATP. A Mg(2+)-binding site is contributed by Asp19. Glu45 contributes to the K(+) binding site. Positions 58 and 101 each coordinate L-methionine. The segment at 101 to 111 is flexible loop; sequence QSADIAMGVDQ. Residues 177-179, 244-245, Asp253, 259-260, Ala276, and Lys280 each bind ATP; these read DGK, RF, and RK. Asp253 is a binding site for L-methionine. Lys284 is an L-methionine binding site.

Belongs to the AdoMet synthase family. As to quaternary structure, homotetramer; dimer of dimers. The cofactor is Mg(2+). Requires K(+) as cofactor.

It localises to the cytoplasm. It carries out the reaction L-methionine + ATP + H2O = S-adenosyl-L-methionine + phosphate + diphosphate. It functions in the pathway amino-acid biosynthesis; S-adenosyl-L-methionine biosynthesis; S-adenosyl-L-methionine from L-methionine: step 1/1. Its function is as follows. Catalyzes the formation of S-adenosylmethionine (AdoMet) from methionine and ATP. The overall synthetic reaction is composed of two sequential steps, AdoMet formation and the subsequent tripolyphosphate hydrolysis which occurs prior to release of AdoMet from the enzyme. The chain is S-adenosylmethionine synthase from Bacillus cereus (strain ATCC 10987 / NRS 248).